Here is a 528-residue protein sequence, read N- to C-terminus: Bifunctional purine biosynthesis protein PurH (528 aa).

Residues 1-146 (MAPTALLSVS…KNHDHVAVLT (146 aa)) enclose the MGS-like domain.

Belongs to the PurH family.

The catalysed reaction is (6R)-10-formyltetrahydrofolate + 5-amino-1-(5-phospho-beta-D-ribosyl)imidazole-4-carboxamide = 5-formamido-1-(5-phospho-D-ribosyl)imidazole-4-carboxamide + (6S)-5,6,7,8-tetrahydrofolate. The enzyme catalyses IMP + H2O = 5-formamido-1-(5-phospho-D-ribosyl)imidazole-4-carboxamide. Its pathway is purine metabolism; IMP biosynthesis via de novo pathway; 5-formamido-1-(5-phospho-D-ribosyl)imidazole-4-carboxamide from 5-amino-1-(5-phospho-D-ribosyl)imidazole-4-carboxamide (10-formyl THF route): step 1/1. It participates in purine metabolism; IMP biosynthesis via de novo pathway; IMP from 5-formamido-1-(5-phospho-D-ribosyl)imidazole-4-carboxamide: step 1/1. The sequence is that of Bifunctional purine biosynthesis protein PurH from Synechococcus sp. (strain WH7803).